Reading from the N-terminus, the 334-residue chain is Formamidase (334 aa).

A CN hydrolase domain is found at 14–260 (FLVAAIQFPV…WEIVTGEIYP (247 aa)). The active-site Proton acceptor is the glutamate 60. Lysine 133 (proton donor) is an active-site residue. Cysteine 166 acts as the Nucleophile in catalysis.

Belongs to the carbon-nitrogen hydrolase superfamily. Aliphatic amidase family.

It catalyses the reaction formamide + H2O = formate + NH4(+). Its function is as follows. Is an aliphatic amidase with a restricted substrate specificity, as it only hydrolyzes formamide. The chain is Formamidase from Helicobacter pylori (strain J99 / ATCC 700824) (Campylobacter pylori J99).